Consider the following 408-residue polypeptide: MAVSYDLRPIGTCPVRESDNIIVKERSKLSLIGLSQDEMAEALKAIGIPERQTRMRVRQLWHWLYVRGVSNFDEMLNISKPMQEIFKKHFSIARPEIAGEQISKDGTRKWLLRFPPRGAGRPVEIETVYIPEEGRGTLCLSSQVGCTLTCSFCYTGTQVLVRNLTAEEILAQLLVARDCLGDFPDRNTPDGAIVPVEGRKITNIVMMGMGEPLYNFEAVKKALLIASDGNGLSLSKRRITLSTSGVVPGMIRTGEEIGVMLAISLHAVNDTLRDMLVPINKKYPLALLMDACRQYPGLSNAKRITFEYVMLKDVNDSLDDAKRLVQLLKGIPAKINLIPFNPWPGSNYQCSDWEQIERFADVVNQAGYASPIRIPRGRDILAACGQLKSASERLRKSERLHLEHIVNS.

The active-site Proton acceptor is the glutamate 126. One can recognise a Radical SAM core domain in the interval 132 to 373 (EEGRGTLCLS…NQAGYASPIR (242 aa)). An intrachain disulfide couples cysteine 139 to cysteine 384. Positions 146, 150, and 153 each coordinate [4Fe-4S] cluster. S-adenosyl-L-methionine contacts are provided by residues 210-211 (GE), serine 242, 264-266 (SLH), and asparagine 341. The S-methylcysteine intermediate role is filled by cysteine 384.

It belongs to the radical SAM superfamily. RlmN family. [4Fe-4S] cluster is required as a cofactor.

The protein localises to the cytoplasm. The catalysed reaction is adenosine(2503) in 23S rRNA + 2 reduced [2Fe-2S]-[ferredoxin] + 2 S-adenosyl-L-methionine = 2-methyladenosine(2503) in 23S rRNA + 5'-deoxyadenosine + L-methionine + 2 oxidized [2Fe-2S]-[ferredoxin] + S-adenosyl-L-homocysteine. It carries out the reaction adenosine(37) in tRNA + 2 reduced [2Fe-2S]-[ferredoxin] + 2 S-adenosyl-L-methionine = 2-methyladenosine(37) in tRNA + 5'-deoxyadenosine + L-methionine + 2 oxidized [2Fe-2S]-[ferredoxin] + S-adenosyl-L-homocysteine. Specifically methylates position 2 of adenine 2503 in 23S rRNA and position 2 of adenine 37 in tRNAs. m2A2503 modification seems to play a crucial role in the proofreading step occurring at the peptidyl transferase center and thus would serve to optimize ribosomal fidelity. This is Dual-specificity RNA methyltransferase RlmN from Bartonella henselae (strain ATCC 49882 / DSM 28221 / CCUG 30454 / Houston 1) (Rochalimaea henselae).